We begin with the raw amino-acid sequence, 157 residues long: Ribosome maturation factor RimP (157 aa).

The protein belongs to the RimP family.

It is found in the cytoplasm. In terms of biological role, required for maturation of 30S ribosomal subunits. This chain is Ribosome maturation factor RimP, found in Helicobacter hepaticus (strain ATCC 51449 / 3B1).